Reading from the N-terminus, the 152-residue chain is Transcriptional regulator MraZ (152 aa).

SpoVT-AbrB domains are found at residues 5–52 (ATLV…PLPE) and 81–124 (ASEC…DETT).

Belongs to the MraZ family. In terms of assembly, forms oligomers.

It localises to the cytoplasm. The protein localises to the nucleoid. In terms of biological role, negatively regulates its own expression and that of the subsequent genes in the proximal part of the division and cell wall (dcw) gene cluster. Acts by binding directly to DNA. May also regulate the expression of genes outside the dcw cluster. This chain is Transcriptional regulator MraZ, found in Shigella flexneri serotype 5b (strain 8401).